The following is a 406-amino-acid chain: Phosphatidylinositol 5-phosphate 4-kinase type-2 alpha (406 aa).

The residue at position 2 (Ala-2) is an N-acetylalanine. Thr-3 is modified (phosphothreonine). The residue at position 14 (Ser-14) is a Phosphoserine. In terms of domain architecture, PIPK spans Ala-33–Leu-405. A required for interaction with PIP5K1A region spans residues Val-59–Asp-65. N6-acetyllysine occurs at positions 89 and 145. The interval Glu-287–Ala-328 is disordered. Residues Glu-289–Ser-304 are compositionally biased toward acidic residues.

As to quaternary structure, homodimer. Interacts with PIP4K2B; the interaction may regulate localization to the nucleus. Probably interacts with PIP5K1A; the interaction inhibits PIP5K1A kinase activity. Post-translationally, phosphorylated in tyrosines. Phosphorylation is induced by light and increases kinase activity.

It localises to the cell membrane. It is found in the nucleus. The protein localises to the lysosome. The protein resides in the cytoplasm. Its subcellular location is the photoreceptor inner segment. It localises to the cell projection. It is found in the cilium. The protein localises to the photoreceptor outer segment. It carries out the reaction a 1,2-diacyl-sn-glycero-3-phospho-(1D-myo-inositol-5-phosphate) + ATP = a 1,2-diacyl-sn-glycero-3-phospho-(1D-myo-inositol-4,5-bisphosphate) + ADP + H(+). It catalyses the reaction 1,2-dihexadecanoyl-sn-glycero-3-phospho-(1D-myo-inositol-5-phosphate) + ATP = 1,2-dihexadecanoyl-sn-glycero-3-phospho-(1D-myo-inositol-4,5-bisphosphate) + ADP + H(+). The catalysed reaction is 1,2-dihexadecanoyl-sn-glycero-3-phospho-(1D-myo-inositol-5-phosphate) + GTP = 1,2-dihexadecanoyl-sn-glycero-3-phospho-(1D-myo-inositol-4,5-bisphosphate) + GDP + H(+). In rod outer segments, activated by light. Functionally, catalyzes the phosphorylation of phosphatidylinositol 5-phosphate (PtdIns5P) on the fourth hydroxyl of the myo-inositol ring, to form phosphatidylinositol 4,5-bisphosphate (PtdIns(4,5)P2). Has both ATP- and GTP-dependent kinase activities. May exert its function by regulating the levels of PtdIns5P, which functions in the cytosol by increasing AKT activity and in the nucleus signals through ING2. May regulate the pool of cytosolic PtdIns5P in response to the activation of tyrosine phosphorylation. Required for lysosome-peroxisome membrane contacts and intracellular cholesterol transport through modulating peroxisomal PtdIns(4,5)P2 level. In collaboration with PIP4K2B, has a role in mediating autophagy in times of nutrient stress. Required for autophagosome-lysosome fusion and the regulation of cellular lipid metabolism. Negatively regulates insulin signaling through a catalytic-independent mechanism. PIP4Ks interact with PIP5Ks and suppress PIP5K-mediated PtdIns(4,5)P2 synthesis and insulin-dependent conversion to PtdIns(3,4,5)P3. May be involved in thrombopoiesis, and the terminal maturation of megakaryocytes and regulation of their size. The protein is Phosphatidylinositol 5-phosphate 4-kinase type-2 alpha of Rattus norvegicus (Rat).